The primary structure comprises 305 residues: Autophagy-related protein 14 (305 aa).

Residues 34 to 147 are a coiled coil; that stretch reads KMNLLILRQE…LDTLSHILAR (114 aa).

It belongs to the ATG14 family. Component of the autophagy-specific VPS34 PI3-kinase complex I.

Its subcellular location is the preautophagosomal structure membrane. The protein localises to the vacuole membrane. Functionally, required for cytoplasm to vacuole transport (Cvt) and autophagy as a part of the autophagy-specific VPS34 PI3-kinase complex I. This complex is essential to recruit the ATG8-phosphatidylinositol conjugate and the ATG12-ATG5 conjugate to the pre-autophagosomal structure. ATG14 mediates the specific binding of the VPS34 PI3-kinase complex I to the preautophagosomal structure (PAS). The chain is Autophagy-related protein 14 from Kluyveromyces marxianus (strain DMKU3-1042 / BCC 29191 / NBRC 104275) (Yeast).